Consider the following 385-residue polypeptide: Palmitoyl-[acyl-carrier-protein] 4-desaturase, chloroplastic (385 aa).

Residues 1–36 constitute a chloroplast transit peptide; that stretch reads MAMKLNALMTLQCPKRNMFTRIAPPQAGRVRSKVSM. 6 residues coordinate Fe cation: E126, E164, H167, E217, E250, and H253.

It belongs to the fatty acid desaturase type 2 family. In terms of assembly, homodimer. Requires Fe(2+) as cofactor. As to expression, found only in tissues which synthesize petroselinic acid, such as developing seeds.

The protein localises to the plastid. The protein resides in the chloroplast. It catalyses the reaction hexadecanoyl-[ACP] + 2 reduced [2Fe-2S]-[ferredoxin] + O2 + 2 H(+) = (4Z)-hexadecenoyl-[ACP] + 2 oxidized [2Fe-2S]-[ferredoxin] + 2 H2O. In terms of biological role, converts palmitoyl-ACP to (4Z)-hexadec-4-enoyl-ACP by introduction of a cis double bond between carbons 4 and 5 of the acyl chain. In Coriandrum sativum (Coriander), this protein is Palmitoyl-[acyl-carrier-protein] 4-desaturase, chloroplastic.